The chain runs to 184 residues: ATP synthase subunit b, chloroplastic (184 aa).

The chain crosses the membrane as a helical span at residues 27–49 (LATNLINLSVVIGVLIFFGKGVL).

This sequence belongs to the ATPase B chain family. As to quaternary structure, F-type ATPases have 2 components, F(1) - the catalytic core - and F(0) - the membrane proton channel. F(1) has five subunits: alpha(3), beta(3), gamma(1), delta(1), epsilon(1). F(0) has four main subunits: a(1), b(1), b'(1) and c(10-14). The alpha and beta chains form an alternating ring which encloses part of the gamma chain. F(1) is attached to F(0) by a central stalk formed by the gamma and epsilon chains, while a peripheral stalk is formed by the delta, b and b' chains.

It is found in the plastid. It localises to the chloroplast thylakoid membrane. Its function is as follows. F(1)F(0) ATP synthase produces ATP from ADP in the presence of a proton or sodium gradient. F-type ATPases consist of two structural domains, F(1) containing the extramembraneous catalytic core and F(0) containing the membrane proton channel, linked together by a central stalk and a peripheral stalk. During catalysis, ATP synthesis in the catalytic domain of F(1) is coupled via a rotary mechanism of the central stalk subunits to proton translocation. Component of the F(0) channel, it forms part of the peripheral stalk, linking F(1) to F(0). The chain is ATP synthase subunit b, chloroplastic from Jasminum nudiflorum (Winter jasmine).